Reading from the N-terminus, the 239-residue chain is Purine nucleoside phosphorylase DeoD-type (239 aa).

His5 is an a purine D-ribonucleoside binding site. Residues Gly21, Arg25, Arg44, and 88–91 contribute to the phosphate site; that span reads RVGS. Residues 180–182 and 204–205 contribute to the a purine D-ribonucleoside site; these read EME and SD. Catalysis depends on Asp205, which acts as the Proton donor.

This sequence belongs to the PNP/UDP phosphorylase family. In terms of assembly, homohexamer; trimer of homodimers.

It catalyses the reaction a purine D-ribonucleoside + phosphate = a purine nucleobase + alpha-D-ribose 1-phosphate. The enzyme catalyses a purine 2'-deoxy-D-ribonucleoside + phosphate = a purine nucleobase + 2-deoxy-alpha-D-ribose 1-phosphate. Its function is as follows. Catalyzes the reversible phosphorolytic breakdown of the N-glycosidic bond in the beta-(deoxy)ribonucleoside molecules, with the formation of the corresponding free purine bases and pentose-1-phosphate. The protein is Purine nucleoside phosphorylase DeoD-type of Pectobacterium atrosepticum (strain SCRI 1043 / ATCC BAA-672) (Erwinia carotovora subsp. atroseptica).